The sequence spans 274 residues: Mitochondrial outer membrane protein porin 3 (274 aa).

At Ser-76 the chain carries Phosphoserine.

This sequence belongs to the eukaryotic mitochondrial porin (TC 1.B.8.1) family. In terms of assembly, interacts with KIN14F/KP1. Interacts with FBA6 and GAPC1. Expressed in leaf tips, anthers and stigma.

The protein localises to the cell membrane. It localises to the mitochondrion outer membrane. Forms a channel through the mitochondrial outer membrane that allows diffusion of small hydrophilic molecules. The channel adopts an open conformation at low or zero membrane potential and a closed conformation at potentials above 30-40 mV. The open state has a weak anion selectivity whereas the closed state is cation-selective. This chain is Mitochondrial outer membrane protein porin 3 (VDAC3), found in Arabidopsis thaliana (Mouse-ear cress).